A 133-amino-acid chain; its full sequence is ATP synthase epsilon chain, chloroplastic (133 aa).

It belongs to the ATPase epsilon chain family. F-type ATPases have 2 components, CF(1) - the catalytic core - and CF(0) - the membrane proton channel. CF(1) has five subunits: alpha(3), beta(3), gamma(1), delta(1), epsilon(1). CF(0) has three main subunits: a, b and c.

The protein localises to the plastid. Its subcellular location is the chloroplast thylakoid membrane. Functionally, produces ATP from ADP in the presence of a proton gradient across the membrane. The sequence is that of ATP synthase epsilon chain, chloroplastic from Citrus sinensis (Sweet orange).